A 274-amino-acid chain; its full sequence is Formamidopyrimidine-DNA glycosylase (274 aa).

Proline 2 (schiff-base intermediate with DNA) is an active-site residue. Glutamate 3 acts as the Proton donor in catalysis. The active-site Proton donor; for beta-elimination activity is lysine 58. The DNA site is built by histidine 91, arginine 110, and lysine 152. The FPG-type zinc-finger motif lies at lysine 237–proline 271. Arginine 261 acts as the Proton donor; for delta-elimination activity in catalysis.

This sequence belongs to the FPG family. Monomer. Zn(2+) is required as a cofactor.

The enzyme catalyses Hydrolysis of DNA containing ring-opened 7-methylguanine residues, releasing 2,6-diamino-4-hydroxy-5-(N-methyl)formamidopyrimidine.. The catalysed reaction is 2'-deoxyribonucleotide-(2'-deoxyribose 5'-phosphate)-2'-deoxyribonucleotide-DNA = a 3'-end 2'-deoxyribonucleotide-(2,3-dehydro-2,3-deoxyribose 5'-phosphate)-DNA + a 5'-end 5'-phospho-2'-deoxyribonucleoside-DNA + H(+). Involved in base excision repair of DNA damaged by oxidation or by mutagenic agents. Acts as a DNA glycosylase that recognizes and removes damaged bases. Has a preference for oxidized purines, such as 7,8-dihydro-8-oxoguanine (8-oxoG). Has AP (apurinic/apyrimidinic) lyase activity and introduces nicks in the DNA strand. Cleaves the DNA backbone by beta-delta elimination to generate a single-strand break at the site of the removed base with both 3'- and 5'-phosphates. This chain is Formamidopyrimidine-DNA glycosylase, found in Legionella pneumophila (strain Paris).